A 170-amino-acid chain; its full sequence is Fimbrial protein (170 aa).

Positions M1 to G7 are excised as a propeptide. An N-methylphenylalanine modification is found at F8. Residues F8–L28 form a helical membrane-spanning segment. An O-linked (Gal...) serine glycan is attached at S70. The residue at position 100 (S100) is an O-(sn-1-glycerophosphoryl)serine. A disulfide bond links C127 and C163.

The protein belongs to the N-Me-Phe pilin family. As to quaternary structure, the pili are polar flexible filaments of about 5.4 nanometers diameter and 2.5 micrometers average length; they consist of only a single polypeptide chain arranged in a helical configuration of five subunits per turn in the assembled pilus. In terms of processing, O-linked glycan consists of GlcNAc-Gal disaccharide.

The protein localises to the fimbrium. It localises to the membrane. Major component of the type IV pilus (T4P) that plays a role in cellular adherence, microcolony formation as well as twitching motility. The polypeptide is Fimbrial protein (pilE) (Neisseria meningitidis serogroup A / serotype 4A (strain DSM 15465 / Z2491)).